A 437-amino-acid polypeptide reads, in one-letter code: Vacuolar protein sorting-associated protein 4A (437 aa).

Residues 1–84 (MTTSTLQKAI…RSKEKHGKKP (84 aa)) are interaction with CHMP1B. An MIT domain is found at 2–80 (TTSTLQKAID…KDYLRSKEKH (79 aa)). N6-acetyllysine is present on Lys-8. The tract at residues 75–106 (RSKEKHGKKPVKENQSEGKGSDSDSEGDNPEK) is disordered. A compositionally biased stretch (basic and acidic residues) spans 84–96 (PVKENQSEGKGSD). A phosphoserine mark is found at Ser-95 and Ser-97. 167-174 (GPPGTGKS) contacts ATP.

It belongs to the AAA ATPase family. As to quaternary structure, proposed to be monomeric or homodimeric in nucleotide-free form and to oligomerize upon binding to ATP to form two stacked hexameric or heptameric rings with a central pore through which ESCRT-III substrates are translocated in an ATP-dependent manner. Interacts with CHMP1A, CHMP1B, CHMP2A, CHMP2B, CHMP3, CHMP4A, CHMP4B, CHMP4C and CHMP6. Interacts with VPS4B; the interaction suggests a heteromeric assembly with VPS4B. Interacts with SPAST. Interacts with IST1. Interacts with ZFYVE19/ANCHR; leading to retain it at midbody. In terms of tissue distribution, ubiquitously expressed.

It localises to the late endosome membrane. The protein localises to the midbody. Its subcellular location is the cytoplasm. It is found in the cytoskeleton. The protein resides in the spindle. It carries out the reaction ATP + H2O = ADP + phosphate + H(+). Functionally, involved in late steps of the endosomal multivesicular bodies (MVB) pathway. Recognizes membrane-associated ESCRT-III assemblies and catalyzes their disassembly, possibly in combination with membrane fission. Redistributes the ESCRT-III components to the cytoplasm for further rounds of MVB sorting. MVBs contain intraluminal vesicles (ILVs) that are generated by invagination and scission from the limiting membrane of the endosome and mostly are delivered to lysosomes enabling degradation of membrane proteins, such as stimulated growth factor receptors, lysosomal enzymes and lipids. It is required for proper accomplishment of various processes including the regulation of endosome size, primary cilium organization, mitotic spindle organization, chromosome segregation, and nuclear envelope sealing and spindle disassembly during anaphase. Involved in cytokinesis: retained at the midbody by ZFYVE19/ANCHR and CHMP4C until abscission checkpoint signaling is terminated at late cytokinesis. It is then released following dephosphorylation of CHMP4C, leading to abscission. VPS4A/B are required for the exosomal release of SDCBP, CD63 and syndecan. Critical for normal erythroblast cytokinesis and correct erythropoiesis. In terms of biological role, (Microbial infection) In conjunction with the ESCRT machinery also appears to function in topologically equivalent membrane fission events, such as the terminal stages of cytokinesis and enveloped virus budding (HIV-1 and other lentiviruses). The sequence is that of Vacuolar protein sorting-associated protein 4A from Homo sapiens (Human).